Consider the following 509-residue polypeptide: Histidine ammonia-lyase (509 aa).

A cross-link (5-imidazolinone (Ala-Gly)) is located at residues 144–146 (ASG). Ser-145 bears the 2,3-didehydroalanine (Ser) mark.

It belongs to the PAL/histidase family. In terms of processing, contains an active site 4-methylidene-imidazol-5-one (MIO), which is formed autocatalytically by cyclization and dehydration of residues Ala-Ser-Gly.

It localises to the cytoplasm. The enzyme catalyses L-histidine = trans-urocanate + NH4(+). Its pathway is amino-acid degradation; L-histidine degradation into L-glutamate; N-formimidoyl-L-glutamate from L-histidine: step 1/3. This is Histidine ammonia-lyase from Rhodospirillum centenum (strain ATCC 51521 / SW).